The chain runs to 418 residues: Tyrosine--tRNA ligase (418 aa).

Residue tyrosine 38 participates in L-tyrosine binding. Positions cysteine 43–serine 52 match the 'HIGH' region motif. 2 residues coordinate L-tyrosine: tyrosine 175 and glutamine 179. The 'KMSKS' region motif lies at lysine 235–threonine 239. Lysine 238 is a binding site for ATP. The S4 RNA-binding domain maps to leucine 348–valine 413.

Belongs to the class-I aminoacyl-tRNA synthetase family. TyrS type 1 subfamily. In terms of assembly, homodimer.

It localises to the cytoplasm. The catalysed reaction is tRNA(Tyr) + L-tyrosine + ATP = L-tyrosyl-tRNA(Tyr) + AMP + diphosphate + H(+). Functionally, catalyzes the attachment of tyrosine to tRNA(Tyr) in a two-step reaction: tyrosine is first activated by ATP to form Tyr-AMP and then transferred to the acceptor end of tRNA(Tyr). This Ehrlichia ruminantium (strain Welgevonden) protein is Tyrosine--tRNA ligase.